A 342-amino-acid chain; its full sequence is S-adenosylmethionine:tRNA ribosyltransferase-isomerase (342 aa).

It belongs to the QueA family. In terms of assembly, monomer.

The protein resides in the cytoplasm. It catalyses the reaction 7-aminomethyl-7-carbaguanosine(34) in tRNA + S-adenosyl-L-methionine = epoxyqueuosine(34) in tRNA + adenine + L-methionine + 2 H(+). Its pathway is tRNA modification; tRNA-queuosine biosynthesis. In terms of biological role, transfers and isomerizes the ribose moiety from AdoMet to the 7-aminomethyl group of 7-deazaguanine (preQ1-tRNA) to give epoxyqueuosine (oQ-tRNA). This chain is S-adenosylmethionine:tRNA ribosyltransferase-isomerase, found in Streptococcus pyogenes serotype M3 (strain ATCC BAA-595 / MGAS315).